A 265-amino-acid polypeptide reads, in one-letter code: MSDMITAAILGLVEGLTEFLPVSSTGHLIITGELLGFTGPKATTFEVAIQLGAILAVVVLYWDRFWGLLRPQPYVRFAGLRGIMLLLLTSLPASVLGLAAHSTIKAHLFTPSTVAIALAVGAIFMLLVERRTERPRYMTLDEMSPALALGIGCFQCLALWPGFSRSAATIMGGMLLGARRGLAAEYSFIAAVPIMFAATGYDLLKSWTLFTPADLPFFATGFVVSFLSAWAAVKLFIALVGRMTFRPFAWYRLAIAPLVYYFMAY.

The next 7 helical transmembrane spans lie at 42-62 (ATTFEVAIQLGAILAVVVLYW), 82-102 (GIMLLLLTSLPASVLGLAAHS), 108-128 (LFTPSTVAIALAVGAIFMLLV), 143-163 (MSPALALGIGCFQCLALWPGF), 181-201 (GLAAEYSFIAAVPIMFAATGY), 221-241 (GFVVSFLSAWAAVKLFIALVG), and 248-264 (FAWYRLAIAPLVYYFMA).

The protein belongs to the UppP family.

The protein resides in the cell inner membrane. It catalyses the reaction di-trans,octa-cis-undecaprenyl diphosphate + H2O = di-trans,octa-cis-undecaprenyl phosphate + phosphate + H(+). Its function is as follows. Catalyzes the dephosphorylation of undecaprenyl diphosphate (UPP). Confers resistance to bacitracin. This is Undecaprenyl-diphosphatase from Nitratidesulfovibrio vulgaris (strain ATCC 29579 / DSM 644 / CCUG 34227 / NCIMB 8303 / VKM B-1760 / Hildenborough) (Desulfovibrio vulgaris).